Here is a 455-residue protein sequence, read N- to C-terminus: EP1-like glycoprotein 2 (455 aa).

The first 22 residues, Met1 to Ala22, serve as a signal peptide directing secretion. The region spanning Glu44–Asp163 is the Bulb-type lectin domain. N-linked (GlcNAc...) asparagine glycans are attached at residues Asn56, Asn106, Asn191, Asn211, Asn241, and Asn289. Residue Cys374 is modified to S-nitrosocysteine. Positions Cys374–Tyr455 constitute a PAN domain. 2 disulfide bridges follow: Cys410-Cys432 and Cys414-Cys420. An N-linked (GlcNAc...) asparagine glycan is attached at Asn446.

Its subcellular location is the secreted. It is found in the cell wall. This chain is EP1-like glycoprotein 2, found in Arabidopsis thaliana (Mouse-ear cress).